The primary structure comprises 55 residues: Large ribosomal subunit protein bL33 (55 aa).

Belongs to the bacterial ribosomal protein bL33 family.

The sequence is that of Large ribosomal subunit protein bL33 from Wigglesworthia glossinidia brevipalpis.